Reading from the N-terminus, the 148-residue chain is MSQTAKVLLINGPNLNLLGRREPGHYGHQTLTTIVDELTRNATQAGVTLEHIQSNAEYQLIDAIHATDAQFIIINPAAFTHTSVALRDAILGVAIPFIEVHLSNVHAREPFRHHSYFSDKALGVICGLGAQGYDFALQAAIKHLSDKH.

Tyr-26 functions as the Proton acceptor in the catalytic mechanism. The substrate site is built by Asn-75, His-81, and Asp-88. His-101 functions as the Proton donor in the catalytic mechanism. Substrate is bound by residues 102–103 (LS) and Arg-112.

Belongs to the type-II 3-dehydroquinase family. In terms of assembly, homododecamer.

The catalysed reaction is 3-dehydroquinate = 3-dehydroshikimate + H2O. Its pathway is metabolic intermediate biosynthesis; chorismate biosynthesis; chorismate from D-erythrose 4-phosphate and phosphoenolpyruvate: step 3/7. Functionally, catalyzes a trans-dehydration via an enolate intermediate. The chain is 3-dehydroquinate dehydratase from Shewanella frigidimarina (strain NCIMB 400).